We begin with the raw amino-acid sequence, 212 residues long: Imidazole glycerol phosphate synthase subunit HisH (212 aa).

Residues 3–208 (RIVIVDYGMG…GRMVCDLIST (206 aa)) form the Glutamine amidotransferase type-1 domain. Cysteine 81 acts as the Nucleophile in catalysis. Catalysis depends on residues histidine 183 and glutamate 185.

Heterodimer of HisH and HisF.

It localises to the cytoplasm. The enzyme catalyses 5-[(5-phospho-1-deoxy-D-ribulos-1-ylimino)methylamino]-1-(5-phospho-beta-D-ribosyl)imidazole-4-carboxamide + L-glutamine = D-erythro-1-(imidazol-4-yl)glycerol 3-phosphate + 5-amino-1-(5-phospho-beta-D-ribosyl)imidazole-4-carboxamide + L-glutamate + H(+). It carries out the reaction L-glutamine + H2O = L-glutamate + NH4(+). It functions in the pathway amino-acid biosynthesis; L-histidine biosynthesis; L-histidine from 5-phospho-alpha-D-ribose 1-diphosphate: step 5/9. Functionally, IGPS catalyzes the conversion of PRFAR and glutamine to IGP, AICAR and glutamate. The HisH subunit catalyzes the hydrolysis of glutamine to glutamate and ammonia as part of the synthesis of IGP and AICAR. The resulting ammonia molecule is channeled to the active site of HisF. The protein is Imidazole glycerol phosphate synthase subunit HisH of Symbiobacterium thermophilum (strain DSM 24528 / JCM 14929 / IAM 14863 / T).